We begin with the raw amino-acid sequence, 141 residues long: Large ribosomal subunit protein uL16 (141 aa).

Residues 1-23 (MLMPKRTKYRKQMKGRNRGKAHR) are disordered.

It belongs to the universal ribosomal protein uL16 family. In terms of assembly, part of the 50S ribosomal subunit.

In terms of biological role, binds 23S rRNA and is also seen to make contacts with the A and possibly P site tRNAs. In Helicobacter pylori (strain J99 / ATCC 700824) (Campylobacter pylori J99), this protein is Large ribosomal subunit protein uL16.